Here is a 257-residue protein sequence, read N- to C-terminus: MAALNEFVSVVVSDGSRDAGLAMLLVSRPPTNALSRQVYREVIAAADELGRRDDVAAVILFGGHEIFSAGDDMPELRTLRGAEAETAARVRRDAIDAVAAIPKPTVAAITGYALGAGLTLALAADWRISGDNVKFGATEILAGLVPGGDALARLTRVAGASKAKELVFSGRFFDAEEALALGLIDEMVAPDDVYDAAAAWARRFLDGPRHALAAAKAGVDAVFELPRAERLAAGQRRYVEVFSAGQGGDAGADPHGG.

Belongs to the enoyl-CoA hydratase/isomerase family.

It carries out the reaction a (3S)-3-hydroxyacyl-CoA = a (2E)-enoyl-CoA + H2O. It catalyses the reaction a 4-saturated-(3S)-3-hydroxyacyl-CoA = a (3E)-enoyl-CoA + H2O. Functionally, could possibly oxidize fatty acids using specific components. The polypeptide is Probable enoyl-CoA hydratase echA17 (echA17) (Mycobacterium avium (strain 104)).